The primary structure comprises 666 residues: DNA mismatch repair protein MutL (666 aa).

Belongs to the DNA mismatch repair MutL/HexB family.

This protein is involved in the repair of mismatches in DNA. It is required for dam-dependent methyl-directed DNA mismatch repair. May act as a 'molecular matchmaker', a protein that promotes the formation of a stable complex between two or more DNA-binding proteins in an ATP-dependent manner without itself being part of a final effector complex. The protein is DNA mismatch repair protein MutL of Clostridium botulinum (strain Loch Maree / Type A3).